The sequence spans 361 residues: Transcription factor MafA (361 aa).

Ser14 is subject to Phosphoserine. Lys32 is covalently cross-linked (Glycyl lysine isopeptide (Lys-Gly) (interchain with G-Cter in SUMO2)). Disordered regions lie at residues Arg40–Ala105 and Gly175–His228. Residues Pro46–Gly76 show a composition bias toward low complexity. Ser49 is subject to Phosphoserine. Phosphothreonine is present on residues Thr53 and Thr57. Residues Ser61 and Ser65 each carry the phosphoserine modification. Basic residues predominate over residues Gly183–Ser211. Over residues Gly212 to Gly226 the composition is skewed to gly residues. The segment at Arg262–Arg287 is basic motif. One can recognise a bZIP domain in the interval Arg262 to Leu325. Positions Leu290–Leu311 are leucine-zipper. The segment at Lys324–Leu361 is disordered. A compositionally biased stretch (gly residues) spans Gly327–Gly338. Positions Pro345–Leu361 are enriched in low complexity.

Belongs to the bZIP family. In terms of assembly, forms homodimers. Monomers and dimers are able to bind DNA, but the off-rate is faster for monomers. Interacts with NEUROD1 and PDX1. May interact with MAFB, FOS, JUN and PCAF. Post-translationally, ubiquitinated, leading to its degradation by the proteasome. Phosphorylated at tyrosines.

It localises to the nucleus. Transcription factor that activates insulin gene expression. Acts synergistically with NEUROD1/BETA2 and PDX1. Binds the insulin enhancer C1/RIPE3b element. Binds to consensus TRE-type MARE 5'-TGCTGACTCAGCA-3' DNA sequence. This is Transcription factor MafA (Mafa) from Rattus norvegicus (Rat).